The sequence spans 112 residues: UPF0060 membrane protein AAur_4166 (112 aa).

4 helical membrane passes run 8–28 (ILFV…WQAV), 33–53 (AWWW…FAAF), 62–82 (VLAA…MLMD), and 91–111 (VIGA…PRPG).

This sequence belongs to the UPF0060 family.

It is found in the cell membrane. The chain is UPF0060 membrane protein AAur_4166 from Paenarthrobacter aurescens (strain TC1).